The chain runs to 168 residues: Nicotinamide-nucleotide adenylyltransferase (168 aa).

It belongs to the archaeal NMN adenylyltransferase family.

It is found in the cytoplasm. It catalyses the reaction beta-nicotinamide D-ribonucleotide + ATP + H(+) = diphosphate + NAD(+). Its pathway is cofactor biosynthesis; NAD(+) biosynthesis; NAD(+) from nicotinamide D-ribonucleotide: step 1/1. The chain is Nicotinamide-nucleotide adenylyltransferase from Methanoculleus marisnigri (strain ATCC 35101 / DSM 1498 / JR1).